Reading from the N-terminus, the 657-residue chain is Replication restart protein PriA (657 aa).

Residues 143–309 enclose the Helicase ATP-binding domain; that stretch reads ITASTGARSF…LRGAVRRLPL (167 aa). 156–163 serves as a coordination point for ATP; sequence GVTGSGKT. A DEAH box motif is present at residues 252–255; it reads DEEH. The Zn(2+) site is built by Cys366, Cys369, Cys375, Cys378, Cys393, Cys396, Cys406, and Cys409. Residues 390–570 form the Helicase C-terminal domain; the sequence is AMQCHYCGRQ…PFVRLIRFVF (181 aa).

It belongs to the helicase family. PriA subfamily. Component of the replication restart primosome. Requires Zn(2+) as cofactor.

It carries out the reaction Couples ATP hydrolysis with the unwinding of duplex DNA by translocating in the 3'-5' direction.. The catalysed reaction is ATP + H2O = ADP + phosphate + H(+). In terms of biological role, initiates the restart of stalled replication forks, which reloads the replicative helicase on sites other than the origin of replication. Recognizes and binds to abandoned replication forks and remodels them to uncover a helicase loading site. Promotes assembly of the primosome at these replication forks. The chain is Replication restart protein PriA from Treponema pallidum (strain Nichols).